The sequence spans 151 residues: Brain ribonuclease (151 aa).

A disordered region spans residues 1-25; that stretch reads KESAAAKFRRQHMDAGSSSSGNSNY. Substrate-binding residues include Lys-7 and Arg-10. The Proton acceptor role is filled by His-12. 4 disulfides stabilise this stretch: Cys-26–Cys-84, Cys-40–Cys-95, Cys-58–Cys-110, and Cys-65–Cys-72. Residue 41–45 participates in substrate binding; it reads KPVNT. Asn-62 carries an N-linked (GlcNAc...) asparagine glycan. Residues Lys-66 and Arg-85 each contribute to the substrate site. The active-site Proton donor is the His-119. Residue Thr-129 is glycosylated (O-linked (GalNAc...) threonine). O-linked (GalNAc...) serine glycosylation occurs at Ser-133.

It belongs to the pancreatic ribonuclease family.

Its subcellular location is the secreted. This chain is Brain ribonuclease (BRN), found in Axis porcinus (Hog deer).